A 436-amino-acid chain; its full sequence is Trigger factor (436 aa).

The PPIase FKBP-type domain occupies 161-246 (DDRVTVDFVG…VNKVEGLSLP (86 aa)).

The protein belongs to the FKBP-type PPIase family. Tig subfamily.

The protein localises to the cytoplasm. It catalyses the reaction [protein]-peptidylproline (omega=180) = [protein]-peptidylproline (omega=0). In terms of biological role, involved in protein export. Acts as a chaperone by maintaining the newly synthesized protein in an open conformation. Functions as a peptidyl-prolyl cis-trans isomerase. This is Trigger factor from Pseudoalteromonas atlantica (strain T6c / ATCC BAA-1087).